We begin with the raw amino-acid sequence, 271 residues long: 3-methyl-2-oxobutanoate hydroxymethyltransferase (271 aa).

Positions 51 and 90 each coordinate Mg(2+). Residues aspartate 51–serine 52, aspartate 90, and lysine 118 each bind 3-methyl-2-oxobutanoate. Glutamate 120 contributes to the Mg(2+) binding site. Glutamate 186 serves as the catalytic Proton acceptor.

This sequence belongs to the PanB family. As to quaternary structure, homodecamer; pentamer of dimers. Mg(2+) serves as cofactor.

Its subcellular location is the cytoplasm. The catalysed reaction is 3-methyl-2-oxobutanoate + (6R)-5,10-methylene-5,6,7,8-tetrahydrofolate + H2O = 2-dehydropantoate + (6S)-5,6,7,8-tetrahydrofolate. It participates in cofactor biosynthesis; (R)-pantothenate biosynthesis; (R)-pantoate from 3-methyl-2-oxobutanoate: step 1/2. Catalyzes the reversible reaction in which hydroxymethyl group from 5,10-methylenetetrahydrofolate is transferred onto alpha-ketoisovalerate to form ketopantoate. The polypeptide is 3-methyl-2-oxobutanoate hydroxymethyltransferase (Xanthomonas axonopodis pv. citri (strain 306)).